The sequence spans 299 residues: Probable lipid kinase YegS (299 aa).

In terms of domain architecture, DAGKc spans 2–133; that stretch reads AEFPASLLIL…IDMAQVNKQT (132 aa). ATP is bound by residues threonine 40, 66 to 72, and threonine 95; that span reads GDGTINE. Residues leucine 215, aspartate 218, and leucine 220 each coordinate Mg(2+). Glutamate 271 acts as the Proton acceptor in catalysis.

Belongs to the diacylglycerol/lipid kinase family. YegS lipid kinase subfamily. It depends on Mg(2+) as a cofactor. The cofactor is Ca(2+).

The protein resides in the cytoplasm. Functionally, probably phosphorylates lipids; the in vivo substrate is unknown. This Escherichia coli (strain 55989 / EAEC) protein is Probable lipid kinase YegS.